Reading from the N-terminus, the 140-residue chain is Ribosome maturation factor RimP (140 aa).

It belongs to the RimP family.

The protein resides in the cytoplasm. Functionally, required for maturation of 30S ribosomal subunits. In Campylobacter hominis (strain ATCC BAA-381 / DSM 21671 / CCUG 45161 / LMG 19568 / NCTC 13146 / CH001A), this protein is Ribosome maturation factor RimP.